Here is a 186-residue protein sequence, read N- to C-terminus: FMN-dependent NADH:quinone oxidoreductase 1 (186 aa).

FMN-binding positions include 15-17 and 81-84; these read SVS and MYNF.

It belongs to the azoreductase type 1 family. As to quaternary structure, homodimer. The cofactor is FMN.

The catalysed reaction is 2 a quinone + NADH + H(+) = 2 a 1,4-benzosemiquinone + NAD(+). It carries out the reaction N,N-dimethyl-1,4-phenylenediamine + anthranilate + 2 NAD(+) = 2-(4-dimethylaminophenyl)diazenylbenzoate + 2 NADH + 2 H(+). Functionally, quinone reductase that provides resistance to thiol-specific stress caused by electrophilic quinones. Also exhibits azoreductase activity. Catalyzes the reductive cleavage of the azo bond in aromatic azo compounds to the corresponding amines. The sequence is that of FMN-dependent NADH:quinone oxidoreductase 1 from Idiomarina loihiensis (strain ATCC BAA-735 / DSM 15497 / L2-TR).